The following is a 295-amino-acid chain: bZIP transcription factor RISBZ5 (295 aa).

Residues 16–26 (REEAGAGDRKP) show a composition bias toward basic and acidic residues. The interval 16 to 157 (REEAGAGDRK…ARRSRRRKQA (142 aa)) is disordered. Positions 109–119 (SDSDSDCDSLL) are enriched in acidic residues. Basic and acidic residues predominate over residues 120–136 (EAERSPRLRGTKSTETK). The bZIP domain maps to 134–197 (ETKRIRRMVS…NTAVTDNRIL (64 aa)). Positions 136-155 (KRIRRMVSNRESARRSRRRK) are basic motif. The segment at 162 to 176 (LESQVEQLKGENSSL) is leucine-zipper.

As to quaternary structure, homodimer.

It localises to the nucleus. Functionally, probable transcription factor that binds to the DNA specific sequence 5'-TGAGTCA-3' found in seed storage protein gene promoters. May function as a negative regulator in cold and drought stress responses. This is bZIP transcription factor RISBZ5 from Oryza sativa subsp. japonica (Rice).